The chain runs to 155 residues: Mediator of RNA polymerase II transcription subunit 21 (155 aa).

Positions 29–73 are disordered; sequence QAPPSVPPGQHRVDTMPEIKGKAASENPQSNPPQPAEPPVPEKIS. The segment covering 39 to 51 has biased composition (basic and acidic residues); the sequence is HRVDTMPEIKGKA. A compositionally biased stretch (pro residues) spans 58-69; sequence SNPPQPAEPPVP. Residues 75 to 147 adopt a coiled-coil conformation; it reads EQFNQDLKEF…EVLLKKVEDK (73 aa).

The protein belongs to the Mediator complex subunit 21 family. In terms of assembly, component of the Mediator complex.

It is found in the nucleus. Its function is as follows. Component of the Mediator complex, a coactivator involved in the regulated transcription of nearly all RNA polymerase II-dependent genes. Mediator functions as a bridge to convey information from gene-specific regulatory proteins to the basal RNA polymerase II transcription machinery. Mediator is recruited to promoters by direct interactions with regulatory proteins and serves as a scaffold for the assembly of a functional preinitiation complex with RNA polymerase II and the general transcription factors. The sequence is that of Mediator of RNA polymerase II transcription subunit 21 (SRB7) from Phaeosphaeria nodorum (strain SN15 / ATCC MYA-4574 / FGSC 10173) (Glume blotch fungus).